The following is a 117-amino-acid chain: Larval cuticle protein A2B (117 aa).

Residues 12–15 form repeat 1; sequence AAPV. Residues 29-95 enclose the Chitin-binding type R&amp;R domain; it reads HPQYQYGYDV…AVVHREPLVA (67 aa). Copy 2 of the repeat occupies 108–111; that stretch reads AAPV.

Functionally, component of the cuticle of the larva of Tenebrio molitor. This is Larval cuticle protein A2B from Tenebrio molitor (Yellow mealworm beetle).